The primary structure comprises 665 residues: Zinc finger CCCH domain-containing protein 45 (665 aa).

Residues 1–55 form a disordered region; the sequence is MDDGDLSFDFEGGLDQPPAGGGGGPAPHSSDPGGVGGGGGGGGPGDGGGHGRGRG. The span at 33-50 shows a compositional bias: gly residues; sequence GGVGGGGGGGGPGDGGGH. 3 consecutive C3H1-type zinc fingers follow at residues 58–85, 86–113, and 114–139; these read SYRQ…HQFD, KARM…HSYD, and DVKE…HVKL. The segment at 167–256 is disordered; that stretch reads HNNYNQQGER…QATRIATPLP (90 aa). The span at 169 to 200 shows a compositional bias: polar residues; it reads NYNQQGERPQHPQGSGLPNQNSIDNTTTTTAQ. Low complexity predominate over residues 205–238; sequence QQAQTTNQQPPQQQQQQQQQQQQQQKPNTNDQVQ. The span at 239–250 shows a compositional bias: polar residues; sequence SVPNGSSNQATR. Residues 260-395 form the YTH domain; that stretch reads SRYFIVKSCN…FIGEQLASLL (136 aa). Residues 432–459 are a coiled coil; that stretch reads DIVLFDDNEEEEEEESEEEEEGNGQESQ. Positions 439-454 are enriched in acidic residues; the sequence is NEEEEEEESEEEEEGN. Disordered regions lie at residues 439 to 469 and 561 to 665; these read NEEE…GMMW and GPLM…SRKR. Gly residues predominate over residues 561–573; it reads GPLMGGLGMGGPG. Residues 596 to 623 are compositionally biased toward basic and acidic residues; the sequence is TKREQRRPGGERGDRYETTSDQGSRGHD.

The sequence is that of Zinc finger CCCH domain-containing protein 45 from Oryza sativa subsp. japonica (Rice).